A 308-amino-acid chain; its full sequence is MSKTAIIFPGQGAQKVGMAQDLFNNNDQATEILTSAAKTLDFDILETMFTDEEGKLGETENTQPALLTHSSALLAALKNLNPDFTMGHSLGEYSSLVAADVLSFEDAVKIVRKRGQLMAQAFPTGVGSMAAVLGLDFDKVDEICKSLSSDDKIIEPANINCPGQIVVSGHKALIDELVEKGKSLGAKRVMPLAVSGPFHSSLMKVIEEDFSSYINQFEWRDAKFPVVQNVNAQGETDKEVIKSNMVKQLYSPVQFINSTEWLIDQGVDHFIEIGPGKVLSGLIKKINRDVKLTSIQTLEDVKGWNEND.

Residues S89 and H199 contribute to the active site.

It belongs to the FabD family.

It catalyses the reaction holo-[ACP] + malonyl-CoA = malonyl-[ACP] + CoA. It functions in the pathway lipid metabolism; fatty acid biosynthesis. This chain is Malonyl CoA-acyl carrier protein transacylase (fabD), found in Staphylococcus aureus (strain Mu50 / ATCC 700699).